Reading from the N-terminus, the 597-residue chain is Dynein intermediate chain 3, ciliary (597 aa).

7 WD repeats span residues 159–210 (EIKR…KPEF), 213–253 (KPVS…QAVE), 260–301 (SHHD…EPTE), 314–354 (ENAQ…PPEK), 361–400 (EHIGPVYSLQRNPFFPKNFLTVGDWTARIWSEDIRDSSIM), 404–444 (YHMS…KDPT), and 449–488 (VSDDALHSLRVQDQGRLIATGSNSGTTTLLELSSGLCTMQ). Disordered regions lie at residues 512–546 (RQRELRLKRQGASAQGQDDDEEGGPDEEEDLVAAA) and 562–597 (AAQQAKLSEQDNKIIEEAEENNGSEKKDTENGEKEG). Residues 528-542 (QDDDEEGGPDEEEDL) show a composition bias toward acidic residues. Positions 584-597 (GSEKKDTENGEKEG) are enriched in basic and acidic residues.

Belongs to the dynein intermediate chain family. Consists of at least two heavy chains (alpha and beta), three intermediate chains and several light chains.

The protein localises to the cytoplasm. It is found in the cytoskeleton. The protein resides in the cilium axoneme. May play a role in the regulation of dynein heavy chain activity. The polypeptide is Dynein intermediate chain 3, ciliary (Heliocidaris crassispina (Sea urchin)).